The chain runs to 718 residues: F-box/LRR-repeat protein 18 (718 aa).

Residues 25-72 (GVHLLGFSDEILLHILSHVPSTDLILNVRRTCRKLAALCLDKSLIHTV) form the F-box domain. 12 LRR repeats span residues 77 to 103 (DYQASEDKVRQLVKEIGREIQQLSMAG), 104 to 128 (CYWLPGSTVEHVARCRSLVKVNLSG), 129 to 153 (CHLTSLRLSKMLSALQHLRSLAIDV), 177 to 201 (KQTLFTPSYGVVPCCTSLEKLLLYF), 324 to 352 (CTLSGGHLIQQVINGGKDLRSLASLNLSG), 367 to 392 (EDDIDSSILETLVASCCNLRHLNLSA), 393 to 422 (AHHHSSEGLGRHLCQLLARLRHLRSLSLPV), 468 to 492 (CPQPSSVFWSLLKNLPFLEHLELIG), 516 to 540 (AQSVGDSEVAAIGQLAFLRHLTLAQ), 542 to 567 (PSVLTGSGLVNIGLQCQQLRSLSLAN), 572 to 597 (GKVVYMPALSDMLKHCKRLRDLRLEQ), and 599 to 623 (YFSANAQFFQALSQCPSLQRLCLVS).

As to quaternary structure, directly interacts with SKP1 and CUL1.

In terms of biological role, substrate-recognition component of the SCF (SKP1-CUL1-F-box protein)-type E3 ubiquitin ligase complex. The polypeptide is F-box/LRR-repeat protein 18 (FBXL18) (Homo sapiens (Human)).